Reading from the N-terminus, the 393-residue chain is MSQPISPGLIRSTLRQFLDSEASGGLVLMAVALAAIVTANSPLAEGYFHALHIYLGPLSLLHWINDALMALFFLLVGLEIKREMLDGQLSSWSRRILPGAAALGGMLFPALFYILFNRENPAALRGWAIPTATDIAFALGVISLFGPRVPASLKIFLAALAIIDDLGAVVIIALFYTSDLNLLALAAAAAVLAALYGMNRARILKLWPYLLLGAVLWVLVFASGIHATLAGVLLALTIPLKATPGTREASHEQSPLHHLEHILQKPVAFIVVPIFGFANAGVSFSGVSAATLTEPLTLGVAAGLLLGKLVGVLSTVFLLVKIGLADLPAKASWGQMTGVAALCGIGFTMSLFIGLLAFNDPDVQDHVKMGILLGSLLSGLVGAAMLATFNRRS.

11 helical membrane passes run G24–A44, L58–L78, I96–F116, G126–G146, I155–F175, S178–M198, A214–L234, V267–V287, V300–V320, G338–F358, and M369–F389.

Belongs to the NhaA Na(+)/H(+) (TC 2.A.33) antiporter family.

It is found in the cell inner membrane. The catalysed reaction is Na(+)(in) + 2 H(+)(out) = Na(+)(out) + 2 H(+)(in). Its function is as follows. Na(+)/H(+) antiporter that extrudes sodium in exchange for external protons. The protein is Na(+)/H(+) antiporter NhaA of Rhizobium etli (strain ATCC 51251 / DSM 11541 / JCM 21823 / NBRC 15573 / CFN 42).